Reading from the N-terminus, the 66-residue chain is FMRFamide-like neuropeptide 21 (66 aa).

The N-terminal stretch at 1-16 (MRLFILLSCLLAWVLA) is a signal peptide.

The protein belongs to the FARP (FMRFamide related peptide) family. Post-translationally, may be processed by convertase egl-3. Expressed in the ADL, ASE and ASH sensory neurons, the URA motor neurons and the MC, M2 and M4 pharyngeal neurons.

The protein localises to the secreted. Its function is as follows. FMRFamide-like neuropeptide. Involved in modulating locomotion quiescence during the sleep-like state called lethargus which occurs during molting between larval and adult stages, acting via the G-protein coupled receptor npr-1. Plays a role in modulating social and feeding behavior. Ligand to G-protein coupled receptor npr-1. The sequence is that of FMRFamide-like neuropeptide 21 from Caenorhabditis elegans.